Here is a 360-residue protein sequence, read N- to C-terminus: Phospho-N-acetylmuramoyl-pentapeptide-transferase (360 aa).

10 helical membrane passes run 27-47, 72-92, 94-114, 132-152, 168-188, 199-219, 235-255, 263-283, 288-308, and 338-358; these read IVSL…LIAW, PTMG…MWAY, SNPY…VGFI, WKYF…FAVG, IMPQ…VGTS, GLAI…AWAT, FAGE…GFLW, VFMG…IAVL, FLLL…ILQV, and VIVR…ATLK.

The protein belongs to the glycosyltransferase 4 family. MraY subfamily. Mg(2+) serves as cofactor.

It is found in the cell inner membrane. The enzyme catalyses UDP-N-acetyl-alpha-D-muramoyl-L-alanyl-gamma-D-glutamyl-meso-2,6-diaminopimeloyl-D-alanyl-D-alanine + di-trans,octa-cis-undecaprenyl phosphate = di-trans,octa-cis-undecaprenyl diphospho-N-acetyl-alpha-D-muramoyl-L-alanyl-D-glutamyl-meso-2,6-diaminopimeloyl-D-alanyl-D-alanine + UMP. Its pathway is cell wall biogenesis; peptidoglycan biosynthesis. In terms of biological role, catalyzes the initial step of the lipid cycle reactions in the biosynthesis of the cell wall peptidoglycan: transfers peptidoglycan precursor phospho-MurNAc-pentapeptide from UDP-MurNAc-pentapeptide onto the lipid carrier undecaprenyl phosphate, yielding undecaprenyl-pyrophosphoryl-MurNAc-pentapeptide, known as lipid I. The polypeptide is Phospho-N-acetylmuramoyl-pentapeptide-transferase (Sodalis glossinidius (strain morsitans)).